We begin with the raw amino-acid sequence, 84 residues long: Sulfur carrier protein TusA (84 aa).

Catalysis depends on C21, which acts as the Cysteine persulfide intermediate.

It belongs to the sulfur carrier protein TusA family.

It is found in the cytoplasm. Its function is as follows. Sulfur carrier protein which probably makes part of a sulfur-relay system. This is Sulfur carrier protein TusA from Pseudomonas syringae pv. syringae (strain B728a).